The chain runs to 209 residues: uncharacterized protein (209 aa).

Over residues 1-15 (MHRIDTKTAQKDKFG) the composition is skewed to basic and acidic residues. Residues 1–34 (MHRIDTKTAQKDKFGAGKNGFTRGNPQTGTPATD) are disordered. The span at 22–31 (TRGNPQTGTP) shows a compositional bias: polar residues.

To E.coli YfdL and M.jannaschii MJ0347.

This is an uncharacterized protein from Escherichia coli (strain K12).